The primary structure comprises 228 residues: Ribonuclease 3 (228 aa).

One can recognise an RNase III domain in the interval 5-127; that stretch reads LTALQERLKH…LIGAVYLDAG (123 aa). Glutamate 40 contributes to the Mg(2+) binding site. Aspartate 44 is a catalytic residue. The Mg(2+) site is built by aspartate 113 and glutamate 116. Glutamate 116 is an active-site residue. Residues 154–224 enclose the DRBM domain; the sequence is DPKTELQEWL…AAAMLIRLKA (71 aa).

The protein belongs to the ribonuclease III family. As to quaternary structure, homodimer. Mg(2+) serves as cofactor.

Its subcellular location is the cytoplasm. It carries out the reaction Endonucleolytic cleavage to 5'-phosphomonoester.. Its function is as follows. Digests double-stranded RNA. Involved in the processing of primary rRNA transcript to yield the immediate precursors to the large and small rRNAs (23S and 16S). Processes some mRNAs, and tRNAs when they are encoded in the rRNA operon. Processes pre-crRNA and tracrRNA of type II CRISPR loci if present in the organism. The polypeptide is Ribonuclease 3 (Variovorax paradoxus (strain S110)).